Reading from the N-terminus, the 147-residue chain is MLEMGRRVMVAGTFDIIHEGHIKMLWSAKSLAGDDGELVVVVARDENVRKYKKREPILEESIRAYIVKNLKPVDRVVLGERDPIESVLKLRPDVIALGYDQWADENWLREELLKRGLNVEIVRLPRFGDSSSSSIVRRVIKLFCSSE.

Residues 13–14 (TF), 18–21 (HEGH), aspartate 100, and phenylalanine 127 contribute to the ATP site.

The protein belongs to the archaeal FAD synthase family. In terms of assembly, homodimer. It depends on a divalent metal cation as a cofactor.

It catalyses the reaction FMN + ATP + H(+) = FAD + diphosphate. It functions in the pathway cofactor biosynthesis; FAD biosynthesis; FAD from FMN: step 1/1. Functionally, catalyzes the transfer of the AMP portion of ATP to flavin mononucleotide (FMN) to produce flavin adenine dinucleotide (FAD) coenzyme. This Korarchaeum cryptofilum (strain OPF8) protein is FAD synthase.